The primary structure comprises 78 residues: Dihydrofolate reductase type 2 (78 aa).

Residues K32 and 66–69 (VQIY) each bind NADP(+). Position 68 (I68) interacts with substrate.

Homotetramer.

It catalyses the reaction (6S)-5,6,7,8-tetrahydrofolate + NADP(+) = 7,8-dihydrofolate + NADPH + H(+). It participates in cofactor biosynthesis; tetrahydrofolate biosynthesis; 5,6,7,8-tetrahydrofolate from 7,8-dihydrofolate: step 1/1. Functionally, key enzyme in folate metabolism. Catalyzes an essential reaction for de novo glycine and purine synthesis, and for DNA precursor synthesis. This is Dihydrofolate reductase type 2 from Escherichia coli.